The following is a 347-amino-acid chain: Druantia protein DruD (347 aa).

Its subcellular location is the cytoplasm. Functionally, component of antiviral defense system Druantia type I, composed of DruA, DruB, DruC, DruD and DruE. Expression of Druantia in E.coli (strain MG1655) confers resistance to phage lambda, SECphi18, SECphi27 and T4. The chain is Druantia protein DruD from Escherichia coli (strain UMEA 4076-1).